The sequence spans 146 residues: Ribonuclease VapC41 (146 aa).

The region spanning 3-142 is the PINc domain; it reads LCDTNIWLAL…FTQYGGIELR (140 aa). Mg(2+) is bound by residues Asp-5 and Asp-112.

The protein belongs to the PINc/VapC protein family. Mg(2+) serves as cofactor.

Its function is as follows. Toxic component of a type II toxin-antitoxin (TA) system. An RNase. Its toxic effect is neutralized by coexpression with cognate antitoxin VapB41. In Mycobacterium tuberculosis (strain CDC 1551 / Oshkosh), this protein is Ribonuclease VapC41.